We begin with the raw amino-acid sequence, 171 residues long: Calcium channel flower homolog (171 aa).

Residues 1 to 31 (MSGSVAAGAAAGPVPPAQEEGMTWWYRWLCR) lie on the Cytoplasmic side of the membrane. Residues 32–52 (LAGVLGAVSCAISGLFNCVTI) traverse the membrane as a helical segment. Topologically, residues 53 to 56 (HPLN) are extracellular. A helical membrane pass occupies residues 57–77 (IAAGVWMIMNAFILLLCEAPF). The Cytoplasmic portion of the chain corresponds to 78–101 (CCQFVEFANTVAEKVDRLRSWQKA). The helical transmembrane segment at 102–122 (VFYCGMAIVPIVMSLTLTTLL) threads the bilayer. Over 123–124 (GN) the chain is Extracellular. A helical membrane pass occupies residues 125 to 141 (AIAFATGVLYGLSALGK). Residues 142 to 171 (KGDAISYARIQQQRQQADEEKLAETFEGEL) lie on the Cytoplasmic side of the membrane.

This sequence belongs to the calcium channel flower family. In terms of assembly, interacts with adaptor protein complex 2 (AP-2). In terms of tissue distribution, expressed in calyces in the brain (at protein level). Detected in cultured hippocampal neurons (at protein level).

It localises to the cell membrane. The protein resides in the cytoplasmic vesicle. It is found in the secretory vesicle. Its subcellular location is the synaptic vesicle. The protein localises to the golgi apparatus. It localises to the vesicle. Transmembrane protein which mediates synaptic endocytosis and fitness-based cell culling. In response to different stimulus strengths, controls two major modes of synaptic vesicle (SV) retrieval in hippocampal neurons; Clathrin-mediated endocytosis (CME) in response to mild stimulation and activity-dependent bulk endocytosis (ADBE) in response to strong stimulation. In cytotoxic T-lymphoocytes (CTLs) facilitates calcium-dependent endocytosis of cytotoxic granules (CGs) at the immuno synapse. Different isoforms work as fitness fingerprints in 'loser' and 'winner' cells and thereby mediate win/lose decisions as part of the cell competition process. This chain is Calcium channel flower homolog (Cacfd1), found in Rattus norvegicus (Rat).